The chain runs to 860 residues: Leucine--tRNA ligase (860 aa).

A 'HIGH' region motif is present at residues 42–52; that stretch reads PYPSGRLHMGH. A 'KMSKS' region motif is present at residues 619–623; it reads KMSKS. Position 622 (lysine 622) interacts with ATP.

The protein belongs to the class-I aminoacyl-tRNA synthetase family.

Its subcellular location is the cytoplasm. The enzyme catalyses tRNA(Leu) + L-leucine + ATP = L-leucyl-tRNA(Leu) + AMP + diphosphate. This is Leucine--tRNA ligase from Serratia proteamaculans (strain 568).